A 119-amino-acid polypeptide reads, in one-letter code: Large ribosomal subunit protein bL20 (119 aa).

It belongs to the bacterial ribosomal protein bL20 family.

Functionally, binds directly to 23S ribosomal RNA and is necessary for the in vitro assembly process of the 50S ribosomal subunit. It is not involved in the protein synthesizing functions of that subunit. The protein is Large ribosomal subunit protein bL20 of Lactococcus lactis subsp. cremoris (strain MG1363).